The chain runs to 231 residues: Octanoyl-[acyl-carrier-protein]:protein N-octanoyltransferase LIPT2, mitochondrial (231 aa).

The transit peptide at 1–31 (MRQPAVRLVRLGRVPYAELLGLQDRWLRRLQ) directs the protein to the mitochondrion. Residues 41-224 (GTEAGALLLC…AFKEIYKCTL (184 aa)) form the BPL/LPL catalytic domain. Substrate-binding positions include 85–92 (RGGLATFH), 154–156 (AIG), and 167–169 (GLA). Cys-185 serves as the catalytic Acyl-thioester intermediate.

The protein belongs to the LipB family.

It localises to the mitochondrion. It catalyses the reaction octanoyl-[ACP] + L-lysyl-[protein] = N(6)-octanoyl-L-lysyl-[protein] + holo-[ACP] + H(+). Its pathway is protein modification; protein lipoylation via endogenous pathway; protein N(6)-(lipoyl)lysine from octanoyl-[acyl-carrier-protein]: step 1/2. Its function is as follows. Catalyzes the transfer of endogenously produced octanoic acid from octanoyl-acyl-carrier-protein (octanoyl-ACP) onto the lipoyl domains of lipoate-dependent enzymes such as the protein H of the glycine cleavage system (GCSH). Lipoyl-ACP can also act as a substrate although octanoyl-ACP is likely to be the physiological substrate. The chain is Octanoyl-[acyl-carrier-protein]:protein N-octanoyltransferase LIPT2, mitochondrial from Homo sapiens (Human).